Reading from the N-terminus, the 239-residue chain is Orotidine 5'-phosphate decarboxylase (239 aa).

Substrate contacts are provided by residues Asp-10, Lys-32, 59–68, Thr-122, Arg-184, Gln-193, Gly-213, and Arg-214; that span reads DLKLHDIPNT. Lys-61 (proton donor) is an active-site residue.

It belongs to the OMP decarboxylase family. Type 1 subfamily. As to quaternary structure, homodimer.

It catalyses the reaction orotidine 5'-phosphate + H(+) = UMP + CO2. It functions in the pathway pyrimidine metabolism; UMP biosynthesis via de novo pathway; UMP from orotate: step 2/2. In terms of biological role, catalyzes the decarboxylation of orotidine 5'-monophosphate (OMP) to uridine 5'-monophosphate (UMP). This chain is Orotidine 5'-phosphate decarboxylase, found in Shouchella clausii (strain KSM-K16) (Alkalihalobacillus clausii).